Here is a 358-residue protein sequence, read N- to C-terminus: Probable protein phosphatase 2C 34 (358 aa).

The region spanning 62 to 349 (LASVFSRRGE…DDISAVCLFF (288 aa)) is the PPM-type phosphatase domain. Positions 98, 99, 294, and 340 each coordinate Mn(2+).

It belongs to the PP2C family. Requires Mg(2+) as cofactor. Mn(2+) is required as a cofactor.

It catalyses the reaction O-phospho-L-seryl-[protein] + H2O = L-seryl-[protein] + phosphate. It carries out the reaction O-phospho-L-threonyl-[protein] + H2O = L-threonyl-[protein] + phosphate. The sequence is that of Probable protein phosphatase 2C 34 from Arabidopsis thaliana (Mouse-ear cress).